Reading from the N-terminus, the 244-residue chain is MKKLWKFIPFVLMGVIYFTLTNPESAHAMHIMEGFLPVKWAVFWLIVFIPFLVLGLIRIRKLIAIDKNNKLLLALCAAFIFVLSALKIPSVTGSCSHPTGVGLATVMFGPLVVSVLGVIVLLFQALLLAHGGITTLGANAMSMAVIGPMVGFVVYKLARKLNCNKSVSIFLCAMTADLATYFTTSVQLGVVFPDPASGMMASILKFMAIFCVTQVPIAIAEGLLTVVMYNLISKNLPEKVAQLR.

Residues 1–28 (MKKLWKFIPFVLMGVIYFTLTNPESAHA) form the signal peptide. A run of 6 helical transmembrane segments spans residues 37–57 (PVKW…LGLI), 71–91 (LLLA…IPSV), 103–123 (LATV…VLLF), 135–155 (TLGA…FVVY), 166–186 (SVSI…TTSV), and 206–226 (FMAI…LLTV).

It belongs to the CbiM family. In terms of assembly, forms an energy-coupling factor (ECF) transporter complex composed of an ATP-binding protein (A component, CbiO), a transmembrane protein (T component, CbiQ) and 2 possible substrate-capture proteins (S components, CbiM and CbiN) of unknown stoichimetry.

Its subcellular location is the cell membrane. It functions in the pathway cofactor biosynthesis; adenosylcobalamin biosynthesis. Part of the energy-coupling factor (ECF) transporter complex CbiMNOQ involved in cobalt import. This chain is Cobalt transport protein CbiM, found in Listeria seeligeri serovar 1/2b (strain ATCC 35967 / DSM 20751 / CCM 3970 / CCUG 15530 / CIP 100100 / LMG 11386 / NCTC 11856 / SLCC 3954 / 1120).